Here is a 68-residue protein sequence, read N- to C-terminus: Conotoxin Mr3.3 (68 aa).

The first 19 residues, Met1–Ala19, serve as a signal peptide directing secretion. A propeptide spanning residues Val20–Arg51 is cleaved from the precursor. Residues Leu22–His46 are disordered. The segment covering Pro27–His46 has biased composition (basic and acidic residues). Cystine bridges form between Cys53-Cys67, Cys54-Cys63, and Cys59-Cys66. Pro65 carries the post-translational modification 4-hydroxyproline.

Belongs to the conotoxin M superfamily. Expressed by the venom duct.

The protein localises to the secreted. The sequence is that of Conotoxin Mr3.3 from Conus marmoreus (Marble cone).